The sequence spans 78 residues: Defensin beta 136 (78 aa).

An N-terminal signal peptide occupies residues 1–21 (MNLCLSSLLFFLVILLPSGKG). 3 disulfide bridges follow: cysteine 33/cysteine 60, cysteine 40/cysteine 54, and cysteine 44/cysteine 61.

It belongs to the beta-defensin family.

Its subcellular location is the secreted. Host defense peptide that exhibits antimicrobial and antifungal activity. Exhibits antimicrobial activity against E.coli, S.aureus and C.albicans (in vitro). Has high lipopolysaccharide (LPS)-binding affinity, and may thereby be involved in immunoregulation through LPS neutralization. This Pan troglodytes (Chimpanzee) protein is Defensin beta 136 (DEFB136).